A 221-amino-acid polypeptide reads, in one-letter code: 2-phospho-L-lactate guanylyltransferase (221 aa).

Belongs to the CofC family. Homodimer.

It catalyses the reaction (2S)-2-phospholactate + GTP + H(+) = (2S)-lactyl-2-diphospho-5'-guanosine + diphosphate. It participates in cofactor biosynthesis; coenzyme F420 biosynthesis. In terms of biological role, guanylyltransferase that catalyzes the activation of (2S)-2-phospholactate (2-PL) as (2S)-lactyl-2-diphospho-5'-guanosine, via the condensation of 2-PL with GTP. It is involved in the biosynthesis of coenzyme F420, a hydride carrier cofactor. This is 2-phospho-L-lactate guanylyltransferase from Methanothrix thermoacetophila (strain DSM 6194 / JCM 14653 / NBRC 101360 / PT) (Methanosaeta thermophila).